A 449-amino-acid chain; its full sequence is Kynurenine 3-monooxygenase (449 aa).

This sequence belongs to the aromatic-ring hydroxylase family. KMO subfamily. The cofactor is FAD.

The enzyme catalyses L-kynurenine + NADPH + O2 + H(+) = 3-hydroxy-L-kynurenine + NADP(+) + H2O. It participates in cofactor biosynthesis; NAD(+) biosynthesis; quinolinate from L-kynurenine: step 1/3. Its function is as follows. Catalyzes the hydroxylation of L-kynurenine (L-Kyn) to form 3-hydroxy-L-kynurenine (L-3OHKyn). Required for synthesis of quinolinic acid. In Legionella pneumophila (strain Lens), this protein is Kynurenine 3-monooxygenase.